We begin with the raw amino-acid sequence, 286 residues long: Large ribosomal subunit protein uL3 (286 aa).

Q152 carries the N5-methylglutamine modification. A compositionally biased stretch (low complexity) spans 246 to 265; it reads EAAAAAAAAEEQAAMEAAEA. The interval 246–286 is disordered; it reads EAAAAAAAAEEQAAMEAAEAAEAKTDTVAEAEAAEKKEGDA. Positions 266-286 are enriched in basic and acidic residues; sequence AEAKTDTVAEAEAAEKKEGDA.

It belongs to the universal ribosomal protein uL3 family. In terms of assembly, part of the 50S ribosomal subunit. Forms a cluster with proteins L14 and L19. Post-translationally, methylated by PrmB.

Its function is as follows. One of the primary rRNA binding proteins, it binds directly near the 3'-end of the 23S rRNA, where it nucleates assembly of the 50S subunit. The polypeptide is Large ribosomal subunit protein uL3 (Roseobacter denitrificans (strain ATCC 33942 / OCh 114) (Erythrobacter sp. (strain OCh 114))).